The sequence spans 349 residues: Protein POOR HOMOLOGOUS SYNAPSIS 1 (349 aa).

The protein localises to the cytoplasm. Functionally, required for accurate chromosome segregation in meiosis. Required for pairing to occur between homologous chromosomes. Acts in early recombination steps and ensures pairing fidelity and proper repair of meiotic DNA double-strand-breaks. Regulates recombination and pairing of homologous chromosomes during meiotic prophase by controlling transport of RAD50 from cytoplasm to the nucleus. May affect pairing of the gene-rich fraction of the genome rather than preventing pairing between repetitive DNA elements. The sequence is that of Protein POOR HOMOLOGOUS SYNAPSIS 1 from Arabidopsis thaliana (Mouse-ear cress).